Reading from the N-terminus, the 1087-residue chain is MADPVQSLAQLEILCKQLYETTDTSTRLQAEKALVEFTNSSECLSKCQLLLERGSSSYSQLLAATCLTKLVSRSTNPLPLEQRIDIRNYVLTYLATRPKLASFVTQALIQLYARITKLGWFDSQKDEYVFRSVIGDVTRFLQDSVEYCVIGVSILSQLTNEINQADATHPLTKHRKIASSFRDSALFEIFTLSCNLLKQASGKSLLLSDGSQHDLLMQLLKLTHNCLNFDFIGTSTDESSDDLCTVQIPTSWRSAFLDSSTLQLFFDLYHSIPPNFSPLVLSCLVQIASVRRSLFNNAERAKFLSHLVDGVKRILENPQSLSDPNNYHEFCRLLARLKSNYQLGELVKVENYPEVIRLIANFTVTSLQHWEFAPNSVHYLLSLWQRLAASVPYVKATEPHLLETYTPEVTKAYVTSRLESVHIILRDGLEDPLEDAGLVQQQLDQLSTIGRCEYDKTCALLVQLFDQSAQTYQELLQSGSAPSMELAVQEGRLTWLVYIIGAVIGGRVSFASTDEQDAMDGELVCRVLQLMNLTDSRLAQAGNEKLELSMLSLFEQFRKIYIGDQVQKSSKLYRRLSDVLGLNDETMVLSIFIGKIITNLKYWGRCEPITSKTLQLLNDLSIGYSSVRKLVKLSAVQFMLNNHTSEHFSFLGINSQSNLSDMRCRTTFYTALGRLLMVDLGEDEEQFSQFMMPLTAAFESLAQMFNSNNFNEQEAKRSLVGLVRDLRGIAFAFNAKSSFMMLFDWIYPAYMPILQRAIELWFHDPACTTPILKLMAELVHNRSQRLQFDVSSPNGILLFRETSKMITTYGNRILTLGELPKEQLYVLKLKGISICFSVLKAALSGNYVNFGVFRLYGDEALDNALQTFVKLLLSVPHSDLLDYPKLSQSYYSLLEVLTQDHMSFIASLEPHVIMYILSSISEGLTALDTMVCTGCCSCLDHIVTYLFKQLSRSGKKRGAPPPQESERFLHIMQQHPEMIQQMLSTVLNIIIFEDCRNQWSMSRPLLGLILLNEKYFSDLRSSIVSSQPPEKQQAMHLCFENLMEGIEGNLLTKNRDRFTQNLSAFRREVNDSMKNSSCGPNSNEMMS.

One can recognise an Importin N-terminal domain in the interval 30–96; it reads AEKALVEFTN…RNYVLTYLAT (67 aa).

This sequence belongs to the exportin family. Expressed in oocytes (at protein level).

The protein resides in the cytoplasm. The protein localises to the nucleus. Functionally, mediates the nuclear export of proteins (cargos) with broad substrate specificity. This chain is Exportin-7-A (xpo7-a), found in Xenopus laevis (African clawed frog).